Reading from the N-terminus, the 258-residue chain is MKIQKIEKKKRLYLLECDNGDSLYVTEDTIVHFMLSKGMEISPEQLESIKQFAQFSYGKNLALYYISFQVRTQKQVYDYLKKHDLENTIIQKIIEELIKENWINDQKYVESFLRQNMTNGDKGPQLIKQKLMQKGISDKIIEKAISEVDFYPIAEKAALKMISRYQDKLPRKALQDKLTQLLINKGFSYDLVKAVNGNLSIETDQENTLDLLEKEADKQLRKLSKRYEGYALRQKLFQALYRKGYDSDDIQSLLSEIL.

The protein belongs to the RecX family.

Its subcellular location is the cytoplasm. Functionally, modulates RecA activity. The sequence is that of Regulatory protein RecX from Streptococcus uberis (strain ATCC BAA-854 / 0140J).